The primary structure comprises 501 residues: Cytochrome P450 monooxygeanse terP (501 aa).

The helical transmembrane segment at 2–22 (PSLLLSLLLLQVPIICAWLLV) threads the bilayer. Position 441 (C441) interacts with heme.

This sequence belongs to the cytochrome P450 family. It depends on heme as a cofactor.

The protein resides in the membrane. It functions in the pathway secondary metabolite biosynthesis. Functionally, cytochrome P450 monooxygeanse; part of the gene cluster that mediates the biosynthesis of terpendoles, indole-diterpene (IDT) mycotoxins including terpendole I, terpendole K, terpendole C, as well as the kinesin Eg5 inhibitor terpendole E. TerP has dual activity and is able to convert terpendole E to 13-desoxyterpendole I and paspaline to 13-desoxypaxilline. Terpendoles biosynthesis begins with the synthesis of geranylgeranyl diphosphate (GGPP) by a yet unidentified GGPP synthase. Condensation of indole-3-glycerol phosphate with GGPP by the prenyltransferase terC then forms 3-geranylgeranylindole (3-GGI), followed by epoxidation and cyclization of this intermediate (by the FAD-dependent monooxygeanse terM and the terpene cyclase terB) to form paspaline. The cytochrome monooxygenase terQ then hydroxylates paspalline at C-11 to yield terpendole E. The cytochrome monooxygenase terP converts terpendole E to 13-desoxyterpendole I, and terQ converts 13-desoxyterpendole I into terpendole I. TerF and terK are required for conversion of terpendole I to terpendole C which is further converted to terpendole K. In Tolypocladium album (Soil fungus), this protein is Cytochrome P450 monooxygeanse terP.